A 307-amino-acid chain; its full sequence is Elongation factor Ts (307 aa).

Positions 79–82 are involved in Mg(2+) ion dislocation from EF-Tu; sequence TDFV.

Belongs to the EF-Ts family.

It is found in the cytoplasm. Functionally, associates with the EF-Tu.GDP complex and induces the exchange of GDP to GTP. It remains bound to the aminoacyl-tRNA.EF-Tu.GTP complex up to the GTP hydrolysis stage on the ribosome. The protein is Elongation factor Ts of Sinorhizobium fredii (strain NBRC 101917 / NGR234).